Reading from the N-terminus, the 905-residue chain is Phosphatidylethanolamine N-methyltransferase (905 aa).

2 stretches are compositionally biased toward polar residues: residues 1-22 (MTNQ…STSV) and 40-58 (DSNG…SSLN). A disordered region spans residues 1–73 (MTNQIPSASS…SEPERYGCTP (73 aa)). Over 1–104 (MTNQIPSASS…DPRFSKTPWD (104 aa)) the chain is Lumenal. The helical transmembrane segment at 105–125 (WIVISSILAQVLLFFMTTGAV) threads the bilayer. The Cytoplasmic segment spans residues 126-128 (RRY). A helical membrane pass occupies residues 129–149 (SMMLCFFFWRISYDAGIGFLL). Residues 150-209 (HMQSNHRKVVTWISDFGFFDKENHPKLYDLTKKQLISKMDSSYNYDTSPLEFNSWLVFRH) are Lumenal-facing. The helical transmembrane segment at 210 to 230 (FVDLILMCDFCSYILMGLAWT) threads the bilayer. At 231–236 (CWPKVN) the chain is on the cytoplasmic side. The helical transmembrane segment at 237–257 (IILQFLRIFGGIALIVFNYWV) threads the bilayer. At 258-268 (KMDAHRVVRDY) the chain is on the lumenal side. The helical transmembrane segment at 269–289 (AWYWGDFFFLLRSSLVFNGVF) threads the bilayer. Residues 290-313 (ELAPHPMYSVGYAGYYGMSLLTGS) lie on the Cytoplasmic side of the membrane. A helical transmembrane segment spans residues 314–334 (YAVLFASILAHAAQFGFLLFV). The Lumenal segment spans residues 335–379 (ENPHIERTYGTDINHARLSPRGEDNEFELPPEHDLVGFVNFDFTR). Ser353 is modified (phosphoserine). A helical membrane pass occupies residues 380–400 (ISDVALLIIALYSIFIILLSS). The Cytoplasmic segment spans residues 401–408 (NSHYSQFW). Residues 409–429 (AIFQAFVWRFLHSIIHAFILF) form a helical membrane-spanning segment. Topologically, residues 430-456 (YQSKSKAWTKHFIRNGESAAYAWSQWK) are lumenal. The helical transmembrane segment at 457–479 (GLYNLTLNMSYISFVMAAWKLYH) threads the bilayer. Residues 480–493 (LPSNWTYGLVSLRH) are Cytoplasmic-facing. A helical membrane pass occupies residues 494 to 514 (ALGFGLIALHIYTSVSIYEDL). Over 515–552 (GQYGWFYGDFFLPSRSPKLVYQGIYRYVNNPERFLGCS) the chain is Lumenal. The chain crosses the membrane as a helical span at residues 553 to 573 (AYWGLALISSSAWIFLIAILA). The Cytoplasmic portion of the chain corresponds to 574–905 (QLSNLAIIRL…FDGPSGAKDD (332 aa)).

Belongs to the class VI-like SAM-binding methyltransferase superfamily. CHO2 family.

The protein resides in the endoplasmic reticulum membrane. The catalysed reaction is a 1,2-diacyl-sn-glycero-3-phosphoethanolamine + S-adenosyl-L-methionine = a 1,2-diacyl-sn-glycero-3-phospho-N-methylethanolamine + S-adenosyl-L-homocysteine + H(+). Its pathway is phospholipid metabolism; phosphatidylcholine biosynthesis. Catalyzes the first step of the methylation pathway of phosphatidylcholine biosynthesis, the SAM-dependent methylation of phosphatidylethanolamine (PE) to phosphatidylmonomethylethanolamine (PMME). The chain is Phosphatidylethanolamine N-methyltransferase from Schizosaccharomyces pombe (strain 972 / ATCC 24843) (Fission yeast).